Consider the following 131-residue polypeptide: DNA-directed RNA polymerases I, II, and III subunit RPABC2 (131 aa).

The tract at residues methionine 1–aspartate 24 is disordered.

This sequence belongs to the archaeal Rpo6/eukaryotic RPB6 RNA polymerase subunit family. In terms of assembly, component of the RNA polymerase I (Pol I), RNA polymerase II (Pol II) and RNA polymerase III (Pol III) complexes consisting of at least 13, 12 and 17 subunits, respectively.

The protein localises to the nucleus. Its function is as follows. DNA-dependent RNA polymerases catalyze the transcription of DNA into RNA using the four ribonucleoside triphosphates as substrates. Common component of RNA polymerases I, II and III which synthesize ribosomal RNA precursors, mRNA precursors and many functional non-coding RNAs, and small RNAs, such as 5S rRNA and tRNAs, respectively. Pol II is the central component of the basal RNA polymerase II transcription machinery. Pols are composed of mobile elements that move relative to each other. In Pol II, Polr2F/RPB6 is part of the clamp element and together with parts of Polr2A/RPB1 and RPB2 forms a pocket to which the Polr2D/RPB4-Polr2G/RPB7 subcomplex binds. This Drosophila melanogaster (Fruit fly) protein is DNA-directed RNA polymerases I, II, and III subunit RPABC2.